The following is a 254-amino-acid chain: 2-dehydro-3-deoxy-D-gluconate 5-dehydrogenase (254 aa).

Residue Y159 is the Proton acceptor of the active site.

Belongs to the short-chain dehydrogenases/reductases (SDR) family.

It catalyses the reaction 2-dehydro-3-deoxy-D-gluconate + NAD(+) = 3-deoxy-D-glycero-2,5-hexodiulosonate + NADH + H(+). Its function is as follows. Involved in the degradation of 3,6-anhydro-L-galactose, which is the major monomeric sugar of red macroalgae. Catalyzes the fourth step of the pathway, the reduction of 3-deoxy-D-glycero-2,5-hexodiulosonate (L-DDGal) to 2-dehydro-3-deoxy-D-gluconate (KDG). The polypeptide is 2-dehydro-3-deoxy-D-gluconate 5-dehydrogenase (Pseudoalteromonas atlantica (strain T6c / ATCC BAA-1087)).